The following is a 454-amino-acid chain: Serine/arginine (SR)-type shuttling mRNA binding protein HRB1 (454 aa).

The tract at residues 1-141 is disordered; sequence MSDQERGSEN…SSGARGDYGP (141 aa). Positions 14-24 are enriched in basic residues; that stretch reads SRSRSRSPVRR. Composition is skewed to basic and acidic residues over residues 25 to 38 and 50 to 113; these read RMSD…DNHL and KFAD…DYPR. An Omega-N-methylarginine modification is found at arginine 127. RRM domains lie at 161-237 and 261-338; these read NSIF…QDNP and HEVI…SKES. Phosphoserine occurs at positions 338, 343, and 355. In terms of domain architecture, RRM 3 spans 376–453; sequence RLIYCSNLPF…CDLDISYAKR (78 aa).

Methylated by HMT1.

It is found in the cytoplasm. The protein resides in the nucleus. Its subcellular location is the P-body. The protein localises to the stress granule. In terms of biological role, binds to intron-containing transcripts and is involved in quality control for the export of spliced mRNAs from the nucleus. Binds to pre-mRNAs until splicing is completed or until faulty mRNAs are degraded. On correctly spliced mRNAs, GBP2 and HRB1 recruit MEX67 to allow nuclear export. On faulty mRNAs, GBP2 and HRB1 associate with the TRAMP complex that guides those pre-mRNAs to the exosome for degradation. The protein is Serine/arginine (SR)-type shuttling mRNA binding protein HRB1 of Saccharomyces cerevisiae (strain ATCC 204508 / S288c) (Baker's yeast).